An 85-amino-acid polypeptide reads, in one-letter code: U4-theraphotoxin-Hhn1a (85 aa).

Residues 1–22 form the signal peptide; it reads MKVTLIAILTCAAVLVLHTTAA. A propeptide spanning residues 23–48 is cleaved from the precursor; it reads EELEAESQLMEVGMPDTELEAVDEER. Intrachain disulfides connect Cys-52–Cys-66, Cys-56–Cys-77, and Cys-71–Cys-82.

The protein belongs to the neurotoxin 12 (Hwtx-2) family. 02 (Hwtx-2) subfamily. As to quaternary structure, monomer. As to expression, expressed by the venom gland.

The protein localises to the secreted. Neurotoxin active on both insects and mammals. The protein is U4-theraphotoxin-Hhn1a of Cyriopagopus hainanus (Chinese bird spider).